The chain runs to 356 residues: Histidinol-phosphate aminotransferase 1 (356 aa).

At Lys-213 the chain carries N6-(pyridoxal phosphate)lysine.

This sequence belongs to the class-II pyridoxal-phosphate-dependent aminotransferase family. Histidinol-phosphate aminotransferase subfamily. Homodimer. Pyridoxal 5'-phosphate is required as a cofactor.

The enzyme catalyses L-histidinol phosphate + 2-oxoglutarate = 3-(imidazol-4-yl)-2-oxopropyl phosphate + L-glutamate. The protein operates within amino-acid biosynthesis; L-histidine biosynthesis; L-histidine from 5-phospho-alpha-D-ribose 1-diphosphate: step 7/9. This chain is Histidinol-phosphate aminotransferase 1, found in Burkholderia pseudomallei (strain K96243).